The following is a 353-amino-acid chain: Methylthioribose-1-phosphate isomerase (353 aa).

Residues 51 to 53 (RGA), arginine 94, and glutamine 199 each bind substrate. Aspartate 240 (proton donor) is an active-site residue. 250–251 (NK) lines the substrate pocket.

It belongs to the eIF-2B alpha/beta/delta subunits family. MtnA subfamily. Homodimer.

It catalyses the reaction 5-(methylsulfanyl)-alpha-D-ribose 1-phosphate = 5-(methylsulfanyl)-D-ribulose 1-phosphate. It participates in amino-acid biosynthesis; L-methionine biosynthesis via salvage pathway; L-methionine from S-methyl-5-thio-alpha-D-ribose 1-phosphate: step 1/6. In terms of biological role, catalyzes the interconversion of methylthioribose-1-phosphate (MTR-1-P) into methylthioribulose-1-phosphate (MTRu-1-P). The chain is Methylthioribose-1-phosphate isomerase from Bacillus pumilus (strain SAFR-032).